Here is a 213-residue protein sequence, read N- to C-terminus: Redox-sensing transcriptional repressor Rex (213 aa).

Residues 18–57 constitute a DNA-binding region (H-T-H motif); the sequence is LYYRIFKRFHAEKIERANSKQIAEAIGIDSATVRRDFSYF. 92–97 contributes to the NAD(+) binding site; that stretch reads GIGNMG.

It belongs to the transcriptional regulatory Rex family. Homodimer.

It is found in the cytoplasm. Functionally, modulates transcription in response to changes in cellular NADH/NAD(+) redox state. Binds to the promoter of the aldehyde-alcohol dehydrogenase adhE gene. Functions as a redox-dependent repressor of adhE expression. The polypeptide is Redox-sensing transcriptional repressor Rex (Streptococcus pneumoniae (strain ATCC BAA-255 / R6)).